Here is a 412-residue protein sequence, read N- to C-terminus: Shaggy-related protein kinase zeta (412 aa).

Over residues 1 to 19 the composition is skewed to pro residues; sequence MTSIPLGPPQPPSLAPQPP. Positions 1–33 are disordered; it reads MTSIPLGPPQPPSLAPQPPHLHGGDSLKRRPDI. A compositionally biased stretch (basic and acidic residues) spans 22–33; it reads HGGDSLKRRPDI. The residue at position 26 (serine 26) is a Phosphoserine. A Protein kinase domain is found at 72-356; it reads YMAERVVGTG…ALEACAHPFF (285 aa). ATP is bound by residues 78–86 and lysine 101; that span reads VGTGSFGIV. Serine 127 is modified (phosphoserine). Threonine 136 and threonine 137 each carry phosphothreonine. Aspartate 197 serves as the catalytic Proton acceptor. A Phosphoserine modification is found at serine 219. Residue tyrosine 232 is modified to Phosphotyrosine. At serine 252 the chain carries Phosphoserine. A Phosphothreonine modification is found at threonine 293. Serine 342 carries the phosphoserine modification. Threonine 346 is subject to Phosphothreonine.

The protein belongs to the protein kinase superfamily. CMGC Ser/Thr protein kinase family. GSK-3 subfamily. Binds to KIB1. Interacts with beet curly top virus AL4/C4 and tomato golden mosaic virus AL4/AC4. In terms of processing, autophosphorylated mainly on threonine and serine residues.

The catalysed reaction is L-seryl-[protein] + ATP = O-phospho-L-seryl-[protein] + ADP + H(+). It carries out the reaction L-threonyl-[protein] + ATP = O-phospho-L-threonyl-[protein] + ADP + H(+). In terms of biological role, may mediate extracellular signals to regulate transcription in differentiating cells. The sequence is that of Shaggy-related protein kinase zeta (ASK6) from Arabidopsis thaliana (Mouse-ear cress).